A 436-amino-acid chain; its full sequence is ATP-dependent protease ATPase subunit HslU (436 aa).

ATP contacts are provided by residues I18, 60–65 (GVGKTE), D249, E314, and R386.

This sequence belongs to the ClpX chaperone family. HslU subfamily. As to quaternary structure, a double ring-shaped homohexamer of HslV is capped on each side by a ring-shaped HslU homohexamer. The assembly of the HslU/HslV complex is dependent on binding of ATP.

It localises to the cytoplasm. In terms of biological role, ATPase subunit of a proteasome-like degradation complex; this subunit has chaperone activity. The binding of ATP and its subsequent hydrolysis by HslU are essential for unfolding of protein substrates subsequently hydrolyzed by HslV. HslU recognizes the N-terminal part of its protein substrates and unfolds these before they are guided to HslV for hydrolysis. This is ATP-dependent protease ATPase subunit HslU from Ruegeria sp. (strain TM1040) (Silicibacter sp.).